A 372-amino-acid polypeptide reads, in one-letter code: D-alanine--D-alanine ligase (372 aa).

The ATP-grasp domain occupies 145–349 (KTVLRAGGIP…CPNLLDQLIE (205 aa)). ATP is bound at residue 176–231 (DRWGTSELFVKAVSLGSSVATLPVKTETEFTKAVKEVFRYDDRLMVEPRIRGREIE). The Mg(2+) site is built by aspartate 303, glutamate 316, and asparagine 318.

Belongs to the D-alanine--D-alanine ligase family. It depends on Mg(2+) as a cofactor. Requires Mn(2+) as cofactor.

Its subcellular location is the cytoplasm. The enzyme catalyses 2 D-alanine + ATP = D-alanyl-D-alanine + ADP + phosphate + H(+). Its pathway is cell wall biogenesis; peptidoglycan biosynthesis. Cell wall formation. This chain is D-alanine--D-alanine ligase, found in Coxiella burnetii (strain CbuK_Q154) (Coxiella burnetii (strain Q154)).